The chain runs to 304 residues: Putative S-adenosyl-L-methionine-dependent methyltransferase MSMEG_1481/MSMEI_1445 (304 aa).

Residues Asp-127 and 156 to 157 (DL) contribute to the S-adenosyl-L-methionine site.

It belongs to the UPF0677 family.

Functionally, exhibits S-adenosyl-L-methionine-dependent methyltransferase activity. The protein is Putative S-adenosyl-L-methionine-dependent methyltransferase MSMEG_1481/MSMEI_1445 of Mycolicibacterium smegmatis (strain ATCC 700084 / mc(2)155) (Mycobacterium smegmatis).